The primary structure comprises 1194 residues: DNA polymerase catalytic subunit (1194 aa).

It belongs to the DNA polymerase type-B family. As to quaternary structure, forms a complex with the ssDNA-binding protein, the DNA polymerase processivity factor, and the alkaline exonuclease. Interacts with the helicase-primase complex composed of the primase, the helicase and the primase-associated factor; this interaction may coordinate leading and lagging strand DNA synthesis at the replication fork.

Its subcellular location is the host nucleus. The catalysed reaction is DNA(n) + a 2'-deoxyribonucleoside 5'-triphosphate = DNA(n+1) + diphosphate. It catalyses the reaction Endonucleolytic cleavage to 5'-phosphomonoester.. Replicates viral genomic DNA. The replication complex is composed of six viral proteins: the DNA polymerase, processivity factor, primase, primase-associated factor, helicase, and ssDNA-binding protein. Additionally, the polymerase contains an intrinsic ribonuclease H (RNase H) activity that specifically degrades RNA/DNA heteroduplexes or duplex DNA substrates in the 5' to 3' direction. Therefore, it can catalyze the excision of the RNA primers that initiate the synthesis of Okazaki fragments at a replication fork during viral DNA replication. This chain is DNA polymerase catalytic subunit, found in Varicella-zoster virus (strain Dumas) (HHV-3).